We begin with the raw amino-acid sequence, 199 residues long: Gene 66 protein (199 aa).

In Mycobacterium (Mycobacteriophage D29), this protein is Gene 66 protein (66).